The chain runs to 353 residues: H(2)-forming methylenetetrahydromethanopterin dehydrogenase-related protein MJ1338 (353 aa).

The protein belongs to the HMD family.

This chain is H(2)-forming methylenetetrahydromethanopterin dehydrogenase-related protein MJ1338, found in Methanocaldococcus jannaschii (strain ATCC 43067 / DSM 2661 / JAL-1 / JCM 10045 / NBRC 100440) (Methanococcus jannaschii).